A 239-amino-acid chain; its full sequence is Uridylate kinase (239 aa).

10 to 13 (KFSG) is a binding site for ATP. The segment at 18–23 (GENGFG) is involved in allosteric activation by GTP. Glycine 52 provides a ligand contact to UMP. Positions 53 and 57 each coordinate ATP. Residues aspartate 73 and 134–141 (TGNPYFTT) contribute to the UMP site. Residues threonine 161, tyrosine 167, and aspartate 170 each contribute to the ATP site.

The protein belongs to the UMP kinase family. As to quaternary structure, homohexamer.

It is found in the cytoplasm. It carries out the reaction UMP + ATP = UDP + ADP. Its pathway is pyrimidine metabolism; CTP biosynthesis via de novo pathway; UDP from UMP (UMPK route): step 1/1. With respect to regulation, allosterically activated by GTP. Inhibited by UTP. Catalyzes the reversible phosphorylation of UMP to UDP. This is Uridylate kinase from Campylobacter jejuni subsp. jejuni serotype O:6 (strain 81116 / NCTC 11828).